Reading from the N-terminus, the 633-residue chain is Membrane protein insertase YidC (633 aa).

The next 6 helical transmembrane spans lie at 3–23, 377–397, 453–473, 499–519, 541–561, and 562–582; these read KNTL…SWFN, FIHN…IILF, LPML…PSAI, IPII…LMTI, GMKA…NQYA, and SGLT…TLIF. The interval 612–633 is disordered; sequence LEEAQRAQQETLRKQQEAKKKR.

This sequence belongs to the OXA1/ALB3/YidC family. Type 1 subfamily. In terms of assembly, interacts with the Sec translocase complex via SecD. Specifically interacts with transmembrane segments of nascent integral membrane proteins during membrane integration.

It is found in the cell inner membrane. In terms of biological role, required for the insertion and/or proper folding and/or complex formation of integral membrane proteins into the membrane. Involved in integration of membrane proteins that insert both dependently and independently of the Sec translocase complex, as well as at least some lipoproteins. Aids folding of multispanning membrane proteins. This Parabacteroides distasonis (strain ATCC 8503 / DSM 20701 / CIP 104284 / JCM 5825 / NCTC 11152) protein is Membrane protein insertase YidC.